A 290-amino-acid polypeptide reads, in one-letter code: MVQLHVKRGDESQFLFNTTVDVQIETLTQQICEIYNARLKVDRICTEIPELADHGISLPPNMQGLTDDQIVELKLKDEWEERCIPSGGAEFKKDEIGRRNGHAPNEKMKDVLRRTMEEAKALISKKQLQANVCVTMEMVKEALDQLRGAVMIVYPMGLPPHDPIRMEIENQEDLTGTQASLQVITNEEAQLWWASKELHRGKKLQDYIGKNEKTKIIVKIQKRGQGAPAREPVVSEDEQKQMMLHYYKRQEELKKLEEADDDTHLQSEWSDRQALKRQFQGLTNIKWGPR.

The protein belongs to the CFAP298 family. As to quaternary structure, interacts with dnaaf1/swt. Interacts with lrrc6/sea. Interacts with dvl (via DEP and PDZ domains). Strongly expressed in ciliated tissues of the embryonic trunk, including the pronephric ducts and spinal canal.

Its subcellular location is the cytoplasm. It localises to the cytoskeleton. The protein localises to the cilium basal body. In terms of biological role, plays a role in motile cilium function, possibly by acting on outer dynein arm assembly. Seems to be important for initiation rather than maintenance of cilium motility. Required for correct positioning of cilia at the apical cell surface, suggesting an additional role in the planar cell polarity (PCP) pathway. May suppress canonical Wnt signaling activity. The chain is Cilia- and flagella-associated protein 298 from Danio rerio (Zebrafish).